A 375-amino-acid polypeptide reads, in one-letter code: Alcohol dehydrogenase 1 (375 aa).

An N-acetylserine modification is found at S2. The Zn(2+) site is built by C47, H68, C98, C101, C104, C112, and C175. Residues 200-205 (GLGGVG), D224, and K229 contribute to the NAD(+) site. An N6-succinyllysine modification is found at K234. Position 293-295 (293-295 (VGV)) interacts with NAD(+). An N6-succinyllysine modification is found at K340. R370 serves as a coordination point for NAD(+).

This sequence belongs to the zinc-containing alcohol dehydrogenase family. Class-I subfamily. Requires Zn(2+) as cofactor.

The protein resides in the cytoplasm. It catalyses the reaction a primary alcohol + NAD(+) = an aldehyde + NADH + H(+). The enzyme catalyses a secondary alcohol + NAD(+) = a ketone + NADH + H(+). The sequence is that of Alcohol dehydrogenase 1 (ADH1) from Peromyscus maniculatus (North American deer mouse).